The sequence spans 38 residues: Alpha-amylase (38 aa).

Belongs to the glycosyl hydrolase 13 family. Monomer. It depends on Ca(2+) as a cofactor. Chloride is required as a cofactor. In terms of tissue distribution, expressed by the venom gland.

Its subcellular location is the secreted. The catalysed reaction is Endohydrolysis of (1-&gt;4)-alpha-D-glucosidic linkages in polysaccharides containing three or more (1-&gt;4)-alpha-linked D-glucose units.. In Tityus serrulatus (Brazilian scorpion), this protein is Alpha-amylase.